Consider the following 386-residue polypeptide: Succinate--CoA ligase [ADP-forming] subunit beta (386 aa).

The 236-residue stretch at 9–244 (KEILRNFGVP…LDEEDPAEVE (236 aa)) folds into the ATP-grasp domain. ATP is bound by residues Lys46, 53-55 (GRG), Glu99, Ala102, and Glu107. Asn199 and Asp213 together coordinate Mg(2+). Residues Asn264 and 321 to 323 (GIM) each bind substrate.

This sequence belongs to the succinate/malate CoA ligase beta subunit family. In terms of assembly, heterotetramer of two alpha and two beta subunits. It depends on Mg(2+) as a cofactor.

The catalysed reaction is succinate + ATP + CoA = succinyl-CoA + ADP + phosphate. The enzyme catalyses GTP + succinate + CoA = succinyl-CoA + GDP + phosphate. It functions in the pathway carbohydrate metabolism; tricarboxylic acid cycle; succinate from succinyl-CoA (ligase route): step 1/1. Functionally, succinyl-CoA synthetase functions in the citric acid cycle (TCA), coupling the hydrolysis of succinyl-CoA to the synthesis of either ATP or GTP and thus represents the only step of substrate-level phosphorylation in the TCA. The beta subunit provides nucleotide specificity of the enzyme and binds the substrate succinate, while the binding sites for coenzyme A and phosphate are found in the alpha subunit. The sequence is that of Succinate--CoA ligase [ADP-forming] subunit beta from Polaromonas sp. (strain JS666 / ATCC BAA-500).